A 301-amino-acid chain; its full sequence is MDKPSFVIQSKEAESAAKQLGVSVIQLLPSLVKPAQSYARTPISKFNVAVVGLGSSGRIFLGVNVEFPNLPLHHSIHAEQFLVTNLTLNGERHLNFFAVSAAPCGHCRQFLQEIRDAPEIKILITDPNNSADSDSAADSDGFLRLGSFLPHRFGPDDLLGKDHPLLLESHDNHLKISDLDSICNGNTDSSADLKQTALAAANRSYAPYSLCPSGVSLVDCDGKVYRGWYMESAAYNPSMGPVQAALVDYVANGGGGGYERIVGAVLVEKEDAVVRQEHTARLLLETISPKCEFKVFHCYEA.

CMP/dCMP-type deaminase domains are found at residues 23–156 (SVIQ…FGPD) and 188–301 (DSSA…CYEA). 64-66 (NVE) lines the substrate pocket. A Zn(2+)-binding site is contributed by His-77. Catalysis depends on Glu-79, which acts as the Proton donor. Residues Cys-104 and Cys-107 each coordinate Zn(2+).

The protein belongs to the cytidine and deoxycytidylate deaminase family. In terms of assembly, homodimer. Zn(2+) serves as cofactor. As to expression, expressed in roots, rosette leaves, stems and flowers.

The catalysed reaction is cytidine + H2O + H(+) = uridine + NH4(+). The enzyme catalyses 2'-deoxycytidine + H2O + H(+) = 2'-deoxyuridine + NH4(+). Inhibited by uridine, CMP and dCMP. Functionally, this enzyme scavenges exogenous and endogenous cytidine and 2'-deoxycytidine for UMP synthesis. Functions as a conventional cytidine deaminase. Has no affinity for RNA and is not involved in RNA-editing by C-to-U deamination. In Arabidopsis thaliana (Mouse-ear cress), this protein is Cytidine deaminase 1 (CDA1).